The chain runs to 79 residues: UPF0180 protein BCE_1513 (79 aa).

Belongs to the UPF0180 family.

This chain is UPF0180 protein BCE_1513, found in Bacillus cereus (strain ATCC 10987 / NRS 248).